We begin with the raw amino-acid sequence, 342 residues long: Type II restriction enzyme CviAII (342 aa).

It catalyses the reaction Endonucleolytic cleavage of DNA to give specific double-stranded fragments with terminal 5'-phosphates.. In terms of biological role, a P subtype restriction enzyme that recognizes the double-stranded sequence 5'-CATG-3' and cleaves after C-1. The sequence is that of Type II restriction enzyme CviAII (CVIAIIR) from Chlorella (PBCV-1).